The sequence spans 402 residues: Major outer membrane porin (402 aa).

Positions 1-22 (MKKLLKSALLFAATGSALSLQA) are cleaved as a signal peptide.

Belongs to the chlamydial porin (CP) (TC 1.B.2) family. As to quaternary structure, part of a disulfide cross-linked outer membrane complex (COMC) composed of the major outer membrane porin (MOMP), the small cysteine-rich protein (OmcA) and the large cysteine-rich periplasmic protein (OmcB).

It localises to the cell outer membrane. In elementary bodies (EBs, the infectious stage, which is able to survive outside the host cell) provides the structural integrity of the outer envelope through disulfide cross-links with the small cysteine-rich protein and the large cysteine-rich periplasmic protein. It has been described in publications as the Sarkosyl-insoluble COMC (Chlamydia outer membrane complex), and serves as the functional equivalent of peptidoglycan. It is present but some of the disulfide bonds are reduced in reticulate bodies (RBs). Functionally, permits diffusion of specific solutes through the outer membrane. This chain is Major outer membrane porin (ompA), found in Chlamydophila psittaci (strain ATCC VR-125 / 6BC) (Chlamydia psittaci).